The following is a 323-amino-acid chain: o-succinylbenzoate synthase (323 aa).

Lys-134 functions as the Proton donor in the catalytic mechanism. Mg(2+) contacts are provided by Asp-162, Glu-191, and Asp-214. The active-site Proton acceptor is the Lys-236.

It belongs to the mandelate racemase/muconate lactonizing enzyme family. MenC type 1 subfamily. Requires a divalent metal cation as cofactor.

The enzyme catalyses (1R,6R)-6-hydroxy-2-succinyl-cyclohexa-2,4-diene-1-carboxylate = 2-succinylbenzoate + H2O. It participates in quinol/quinone metabolism; 1,4-dihydroxy-2-naphthoate biosynthesis; 1,4-dihydroxy-2-naphthoate from chorismate: step 4/7. It functions in the pathway quinol/quinone metabolism; menaquinone biosynthesis. In terms of biological role, converts 2-succinyl-6-hydroxy-2,4-cyclohexadiene-1-carboxylate (SHCHC) to 2-succinylbenzoate (OSB). The sequence is that of o-succinylbenzoate synthase from Yersinia enterocolitica serotype O:8 / biotype 1B (strain NCTC 13174 / 8081).